Reading from the N-terminus, the 122-residue chain is Large ribosomal subunit protein uL14 (122 aa).

The protein belongs to the universal ribosomal protein uL14 family. In terms of assembly, part of the 50S ribosomal subunit. Forms a cluster with proteins L3 and L19. In the 70S ribosome, L14 and L19 interact and together make contacts with the 16S rRNA in bridges B5 and B8.

Its function is as follows. Binds to 23S rRNA. Forms part of two intersubunit bridges in the 70S ribosome. The sequence is that of Large ribosomal subunit protein uL14 from Cyanothece sp. (strain PCC 7425 / ATCC 29141).